We begin with the raw amino-acid sequence, 427 residues long: N-formyl-4-amino-5-aminomethyl-2-methylpyrimidine deformylase (427 aa).

H91 provides a ligand contact to Zn(2+). Residue D93 is part of the active site. D124 provides a ligand contact to Zn(2+). E158 (proton acceptor) is an active-site residue. Zn(2+) contacts are provided by E159, D182, and H396.

This sequence belongs to the peptidase M20A family. Zn(2+) is required as a cofactor. The cofactor is Co(2+).

The catalysed reaction is N-formyl-4-amino-5-aminomethyl-2-methylpyrimidine + H2O = 4-amino-5-aminomethyl-2-methylpyrimidine + formate. The protein operates within cofactor biosynthesis; thiamine diphosphate biosynthesis. Catalyzes the deformylation of the formylaminopyrimidine N-formyl-4-amino-5-aminomethyl-2-methylpyrimidine (FAMP) to give the corresponding aminopyrimidine. This Halalkalibacterium halodurans (strain ATCC BAA-125 / DSM 18197 / FERM 7344 / JCM 9153 / C-125) (Bacillus halodurans) protein is N-formyl-4-amino-5-aminomethyl-2-methylpyrimidine deformylase.